The sequence spans 248 residues: Leucyl/phenylalanyl-tRNA--protein transferase (248 aa).

Belongs to the L/F-transferase family.

Its subcellular location is the cytoplasm. It catalyses the reaction N-terminal L-lysyl-[protein] + L-leucyl-tRNA(Leu) = N-terminal L-leucyl-L-lysyl-[protein] + tRNA(Leu) + H(+). It carries out the reaction N-terminal L-arginyl-[protein] + L-leucyl-tRNA(Leu) = N-terminal L-leucyl-L-arginyl-[protein] + tRNA(Leu) + H(+). The catalysed reaction is L-phenylalanyl-tRNA(Phe) + an N-terminal L-alpha-aminoacyl-[protein] = an N-terminal L-phenylalanyl-L-alpha-aminoacyl-[protein] + tRNA(Phe). Functions in the N-end rule pathway of protein degradation where it conjugates Leu, Phe and, less efficiently, Met from aminoacyl-tRNAs to the N-termini of proteins containing an N-terminal arginine or lysine. This chain is Leucyl/phenylalanyl-tRNA--protein transferase, found in Oleidesulfovibrio alaskensis (strain ATCC BAA-1058 / DSM 17464 / G20) (Desulfovibrio alaskensis).